Reading from the N-terminus, the 61-residue chain is Putative antitoxin RelB2 (61 aa).

In terms of biological role, antitoxin component of a type II toxin-antitoxin (TA) system. Its cognate toxin is RelE2 (Potential). The sequence is that of Putative antitoxin RelB2 (relB2) from Methanocaldococcus jannaschii (strain ATCC 43067 / DSM 2661 / JAL-1 / JCM 10045 / NBRC 100440) (Methanococcus jannaschii).